The following is an 859-amino-acid chain: Homeobox-leucine zipper protein HOX32 (859 aa).

A disordered region spans residues Ala-7 to Gly-31. Residues Asp-29–Lys-92 constitute a DNA-binding region (homeobox). Residues Val-100–Asn-129 adopt a coiled-coil conformation. Over residues Thr-146 to Ala-164 the composition is skewed to polar residues. Positions Thr-146–Ala-172 are disordered. The START domain occupies Asp-171–Glu-393.

Belongs to the HD-ZIP homeobox family. Class III subfamily. Expressed in seedlings, roots, stems, leaf sheaths and blades and panicles.

It is found in the nucleus. Functionally, probable transcription factor. The chain is Homeobox-leucine zipper protein HOX32 (HOX32) from Oryza sativa subsp. japonica (Rice).